The primary structure comprises 958 residues: Dermatan-sulfate epimerase (958 aa).

Positions 1–22 are cleaved as a signal peptide; that stretch reads MRTHTRGAPSVFFIYLLCFVSA. Residues 23 to 902 lie on the Lumenal side of the membrane; it reads YITDENPEVM…APSLSASYTR (880 aa). Residue Asn183 is glycosylated (N-linked (GlcNAc...) (complex) asparagine). The active-site Proton donor is the His205. Residue Tyr261 is part of the active site. N-linked (GlcNAc...) (high mannose) asparagine glycosylation is present at Asn336. An N-linked (GlcNAc...) (complex) asparagine glycan is attached at Asn411. 2 residues coordinate Mn(2+): His452 and Glu470. Tyr473 is a catalytic residue. A Mn(2+)-binding site is contributed by Asn481. N-linked (GlcNAc...) (complex) asparagine glycosylation is present at Asn642. An N-linked (GlcNAc...) (paucimannose) asparagine glycan is attached at Asn648. Residues 903-923 form a helical membrane-spanning segment; it reads LFLILNIAIFFVMLAMQLTYF. Residues 924–933 are Cytoplasmic-facing; that stretch reads QRAQSLHGQR. A helical transmembrane segment spans residues 934 to 954; it reads CLYAVLLIDSCILLWLYSSCS. Residues 955–958 lie on the Lumenal side of the membrane; that stretch reads QSQC.

It belongs to the dermatan-sulfate isomerase family. Requires Mn(2+) as cofactor. In terms of processing, N-glycosylated. Glycosylation is important for enzymatic activity. In terms of tissue distribution, ubiquitously expressed with higher expression in kidney and ovary and lower expression in brain, colon and thymus. Also expressed in renal cell carcinomas, brain tumors, and in a part of melanomas and adenocarcinomas from organs other than the breast. Expressed in squamous cell carcinomas (SCC), glioma, and some adenocarcinoma cell lines, but not in breast cancer cell lines or any normal tissues (at protein level).

The protein localises to the endoplasmic reticulum membrane. It is found in the golgi apparatus membrane. The protein resides in the cytoplasmic vesicle membrane. Its subcellular location is the microsome membrane. The catalysed reaction is chondroitin 4'-sulfate = dermatan 4'-sulfate. The protein operates within glycan metabolism; chondroitin sulfate biosynthesis. Its pathway is glycan metabolism; heparan sulfate biosynthesis. In terms of biological role, converts D-glucuronic acid to L-iduronic acid (IdoUA) residues. Plays an important role in the biosynthesis of the glycosaminoglycan/mucopolysaccharide dermatan sulfate. This is Dermatan-sulfate epimerase (DSE) from Homo sapiens (Human).